The following is a 133-amino-acid chain: Heat shock protein 15 (133 aa).

The S4 RNA-binding domain maps to 9-71 (VRLDKWLWAA…DERTVIVKAI (63 aa)). The interval 105-133 (NALTMPHPDRRPDKKERRDLLRFKHGDSE) is disordered. Over residues 111–133 (HPDRRPDKKERRDLLRFKHGDSE) the composition is skewed to basic and acidic residues.

It belongs to the HSP15 family. As to quaternary structure, monomer.

Functionally, involved in the recycling of free 50S ribosomal subunits that still carry a nascent chain. Binds RNA more specifically than DNA. Binds with very high affinity to the free 50S ribosomal subunit. Does not bind it when it is part of the 70S ribosome. This is Heat shock protein 15 (hslR) from Escherichia coli O157:H7.